A 147-amino-acid polypeptide reads, in one-letter code: Hemoglobin subunit gamma (147 aa).

The region spanning 3-147 (NFTAEDKAAI…VASALGSRYH (145 aa)) is the Globin domain. The heme b site is built by histidine 64 and histidine 93.

This sequence belongs to the globin family. As to quaternary structure, heterotetramer of two alpha chains and two gamma chains in fetal hemoglobin (Hb F). In terms of tissue distribution, red blood cells.

In terms of biological role, gamma chains make up the fetal hemoglobin F, in combination with alpha chains. The polypeptide is Hemoglobin subunit gamma (HBG) (Aotus azarae (Azara's night monkey)).